We begin with the raw amino-acid sequence, 394 residues long: Immune-associated nucleotide-binding protein 12 (394 aa).

One can recognise an AIG1-type G domain in the interval 45-251 (KPARTLLLVG…YMADLSHEIR (207 aa)). Positions 54–61 (GRSGNGKS) are G1. GTP-binding positions include 54–62 (GRSGNGKSA) and serine 75. The interval 81–85 (GVTTA) is G2. The G3 stretch occupies residues 103 to 106 (DTPG). The tract at residues 173 to 176 (TNED) is G4. Positions 210–212 (RNR) are G5. GTP is bound at residue asparagine 211. The stretch at 289–387 (NQQLRQMMER…KQMATDLQKS (99 aa)) forms a coiled coil.

This sequence belongs to the TRAFAC class TrmE-Era-EngA-EngB-Septin-like GTPase superfamily. AIG1/Toc34/Toc159-like paraseptin GTPase family. IAN subfamily.

This is Immune-associated nucleotide-binding protein 12 from Arabidopsis thaliana (Mouse-ear cress).